A 234-amino-acid chain; its full sequence is Core atranone cluster (CAC) protein 1 (234 aa).

The protein operates within mycotoxin biosynthesis. Its function is as follows. Part of the core atranone cluster (CAC) which products are predicted to catalyze most or all steps of mycotoxin atranone synthesis, starting from geranylgeranyl pyrophosphate (GGPP). The initial cyclization of GGPP to dolabellane is probably performed by the terpene cyclase ATR13. The Baeyer-Villiger oxidation near the end of the atranone synthesis, which converts atranones D and E to atranones F and G is predicted to be catalyzed by the monooxygenase ATR8. Of the CAC's other predicted gene products, the reducing PKS ATR6 might synthesize a polyketide chain. This polyketide is probably transferred onto the atranone backbone by the polyketide transferase ATR5. Other predicted CAC products include 4 oxygenases (ATR2, ATR3, ATR4, and ATR14), 3 short-chain reductases (ATR7, ATR9, and ATR10), and a methyltransferase (ATR12). These may all be involved in the various steps of atranone biosynthesis, although their specific roles must await experimental determination. This chain is Core atranone cluster (CAC) protein 1, found in Stachybotrys chlorohalonatus (strain IBT 40285).